Consider the following 308-residue polypeptide: GMP synthase [glutamine-hydrolyzing] subunit B (308 aa).

Positions 2–183 (LNPSDFIEEA…LGLPREMIQR (182 aa)) constitute a GMPS ATP-PPase domain. 29–35 (SGGVDSS) is an ATP binding site.

Heterodimer composed of a glutamine amidotransferase subunit (A) and a GMP-binding subunit (B).

It carries out the reaction XMP + L-glutamine + ATP + H2O = GMP + L-glutamate + AMP + diphosphate + 2 H(+). It functions in the pathway purine metabolism; GMP biosynthesis; GMP from XMP (L-Gln route): step 1/1. Catalyzes the synthesis of GMP from XMP. This is GMP synthase [glutamine-hydrolyzing] subunit B (guaAB) from Methanothermobacter thermautotrophicus (strain ATCC 29096 / DSM 1053 / JCM 10044 / NBRC 100330 / Delta H) (Methanobacterium thermoautotrophicum).